A 2641-amino-acid chain; its full sequence is Inverse autotransporter adhesin YeeJ (2641 aa).

Residues 1–26 (MGIKLRRLTAGICLVTQLAFPMAAAA) form the signal peptide. The LysM domain occupies 50–98 (VPYILGALESAQSVAERFGISVAELRKLNQFRTFARGFDNVRQGDELDV). The segment at 99–118 (PAQVSEKKLTPPPGNSSDNL) is disordered. An inverse autotransporter region spans residues 125–400 (TSQQIGSLLA…SRYDLVDRNN (276 aa)). The invasin 3 domain stretch occupies residues 513–605 (QKDSSVSLST…GVDAAKAPAV (93 aa)). 17 consecutive Big-1 domains span residues 617–711 (HSSI…AGFI), 721–815 (IATL…VSFV), 822–913 (QVDL…VNFI), 920–1017 (ALTL…MTFV), 1024–1116 (VVVL…VNIA), 1123–1220 (QVTL…VTFV), 1227–1319 (VVVL…VNIA), 1326–1423 (QVTL…VTFV), 1430–1523 (QVVL…VHFI), 1531–1633 (IIEL…SINV), 1641–1734 (HLTL…VTYV), 1741–1837 (EISL…VNFT), 1844–1941 (QVNL…VTLI), 1948–2032 (KLTS…PTEV), 2048–2139 (FTSL…LEAI), 2142–2236 (KLTL…VKVT), and 2244–2336 (VASF…ITLV). The segment at 2538–2641 (KSWWVNAGDA…FAHATCYKNL (104 aa)) is C-type lectin domain.

This sequence belongs to the intimin/invasin family.

It localises to the cell outer membrane. Its function is as follows. A probable inverse autotransporter, it may be involved in biofilm formation and cell adhesion. May bind peptidoglycan via its LysM domain. Upon overexpression shows increased mature biofilm formation. The protein is Inverse autotransporter adhesin YeeJ of Escherichia coli O17:K52:H18 (strain UMN026 / ExPEC).